The primary structure comprises 456 residues: MSFTIAIIGRPNVGKSTLFNRLVGQKLALVDDMPGVTRDRREGEAKLHDLHFTIIDTAGLDEGPKGSLTARMQEQTETAIALADALFFVIDARVGLTPADRAFADFARRADKPVLLLANKSEGKHGELGAMESYALGLGDPIQISAEHGEGMGELYDALSKIVPPSDDEDDEREETDEERASRPIRVAIVGRPNAGKSTLINHLLGEERLLTSPEAGTTRDSIAVEVEWKGRGFRIFDTAGLRRRSRIEEKLEKLSVADALRAVRFAEVVVLMLDAQNRFEEQDLRIADLVEREGRALVLAVNKWDLMEAQPGQISALRRDADHWLPQITGAPIVAVSGLMGEGIDRLMQAIVEAYAVWNRRVPTAALNRWFEGAIANNPPPAVSGRRLKLNYITQTKARPPSFVLFCSRADAIPQSYLRYLVNSMRETFELPGTPVRITLREKANPFAHKRKRPN.

EngA-type G domains follow at residues 3-167 (FTIA…PPSD) and 185-360 (IRVA…AVWN). Residues 9–16 (GRPNVGKS), 56–60 (DTAGL), and 119–122 (NKSE) contribute to the GTP site. Positions 162 to 181 (IVPPSDDEDDEREETDEERA) are disordered. The span at 166–178 (SDDEDDEREETDE) shows a compositional bias: acidic residues. GTP is bound by residues 191 to 198 (GRPNAGKS), 238 to 242 (DTAGL), and 303 to 306 (NKWD). In terms of domain architecture, KH-like spans 361-445 (RRVPTAALNR…PVRITLREKA (85 aa)).

It belongs to the TRAFAC class TrmE-Era-EngA-EngB-Septin-like GTPase superfamily. EngA (Der) GTPase family. Associates with the 50S ribosomal subunit.

GTPase that plays an essential role in the late steps of ribosome biogenesis. This Bradyrhizobium sp. (strain ORS 278) protein is GTPase Der.